We begin with the raw amino-acid sequence, 488 residues long: Zinc finger protein 345 (488 aa).

15 C2H2-type zinc fingers span residues 62–84 (LECK…QRIH), 90–112 (YECK…QRIH), 118–140 (FECK…QRIH), 146–168 (YECK…QIIH), 174–196 (YECK…HRIH), 202–224 (YECI…RRIH), 230–252 (YECK…QRIH), 258–280 (YICN…QRIH), 286–308 (YVCK…QRIH), 314–336 (YECK…QRMH), 342–364 (YECK…HRIH), 370–392 (YECK…QLIH), 398–420 (YECK…QRIH), 426–448 (YECK…QRIH), and 454–476 (YECK…KKSH).

The protein belongs to the krueppel C2H2-type zinc-finger protein family.

Its subcellular location is the nucleus. In terms of biological role, may be involved in transcriptional regulation. In Homo sapiens (Human), this protein is Zinc finger protein 345 (ZNF345).